The chain runs to 376 residues: UDP-N-acetylglucosamine--N-acetylmuramyl-(pentapeptide) pyrophosphoryl-undecaprenol N-acetylglucosamine transferase (376 aa).

UDP-N-acetyl-alpha-D-glucosamine-binding positions include 11–13 (TGG), asparagine 117, arginine 160, serine 208, and glutamine 310.

The protein belongs to the glycosyltransferase 28 family. MurG subfamily.

The protein resides in the cell inner membrane. It carries out the reaction di-trans,octa-cis-undecaprenyl diphospho-N-acetyl-alpha-D-muramoyl-L-alanyl-D-glutamyl-meso-2,6-diaminopimeloyl-D-alanyl-D-alanine + UDP-N-acetyl-alpha-D-glucosamine = di-trans,octa-cis-undecaprenyl diphospho-[N-acetyl-alpha-D-glucosaminyl-(1-&gt;4)]-N-acetyl-alpha-D-muramoyl-L-alanyl-D-glutamyl-meso-2,6-diaminopimeloyl-D-alanyl-D-alanine + UDP + H(+). Its pathway is cell wall biogenesis; peptidoglycan biosynthesis. In terms of biological role, cell wall formation. Catalyzes the transfer of a GlcNAc subunit on undecaprenyl-pyrophosphoryl-MurNAc-pentapeptide (lipid intermediate I) to form undecaprenyl-pyrophosphoryl-MurNAc-(pentapeptide)GlcNAc (lipid intermediate II). The chain is UDP-N-acetylglucosamine--N-acetylmuramyl-(pentapeptide) pyrophosphoryl-undecaprenol N-acetylglucosamine transferase from Rickettsia conorii (strain ATCC VR-613 / Malish 7).